Consider the following 114-residue polypeptide: MHELSIAHNIVTIASDAAAEAGVDRISAVHLRIGALAGVVADALRFSFAIAAEGTPLAGAELIIEEVPVVVFCPDCNAEVTLTNPRLFRCPRCDRPCGQIVHGRELELVALETP.

His2 provides a ligand contact to Ni(2+). Zn(2+) contacts are provided by Cys73, Cys76, Cys90, and Cys93.

The protein belongs to the HypA/HybF family.

Involved in the maturation of [NiFe] hydrogenases. Required for nickel insertion into the metal center of the hydrogenase. This chain is Hydrogenase maturation factor HypA, found in Chloroflexus aurantiacus (strain ATCC 29366 / DSM 635 / J-10-fl).